The following is a 519-amino-acid chain: Maturase K (519 aa).

This sequence belongs to the intron maturase 2 family. MatK subfamily.

The protein localises to the plastid. It localises to the chloroplast. Functionally, usually encoded in the trnK tRNA gene intron. Probably assists in splicing its own and other chloroplast group II introns. The polypeptide is Maturase K (Keteleeria davidiana (David's keteleeria)).